We begin with the raw amino-acid sequence, 153 residues long: Histone H2B.3 (153 aa).

Residues 1-28 show a composition bias toward basic and acidic residues; sequence MAPKADKKPAAKKPAEEEPATEKAEKAP. The tract at residues 1–60 is disordered; sequence MAPKADKKPAAKKPAEEEPATEKAEKAPAGKKPKAEKRLPAGKSAGKEGGEGKKGKKKAK. N6-acetyllysine occurs at positions 7 and 37. Residue Lys-149 forms a Glycyl lysine isopeptide (Lys-Gly) (interchain with G-Cter in ubiquitin) linkage.

The protein belongs to the histone H2B family. The nucleosome is a histone octamer containing two molecules each of H2A, H2B, H3 and H4 assembled in one H3-H4 heterotetramer and two H2A-H2B heterodimers. The octamer wraps approximately 147 bp of DNA. Post-translationally, can be acetylated to form H2BK6ac and H2BK33ac. Monoubiquitinated to form H2BK143ub1; may give a specific tag for epigenetic transcriptional activation.

It is found in the nucleus. The protein localises to the chromosome. Core component of nucleosome. Nucleosomes wrap and compact DNA into chromatin, limiting DNA accessibility to the cellular machineries which require DNA as a template. Histones thereby play a central role in transcription regulation, DNA repair, DNA replication and chromosomal stability. DNA accessibility is regulated via a complex set of post-translational modifications of histones, also called histone code, and nucleosome remodeling. The sequence is that of Histone H2B.3 from Zea mays (Maize).